Reading from the N-terminus, the 311-residue chain is 4-diphosphocytidyl-2-C-methyl-D-erythritol kinase (311 aa).

K16 is a catalytic residue. Residue 101-111 (PVAGGMAGGSA) participates in ATP binding. The active site involves D143.

The protein belongs to the GHMP kinase family. IspE subfamily.

The catalysed reaction is 4-CDP-2-C-methyl-D-erythritol + ATP = 4-CDP-2-C-methyl-D-erythritol 2-phosphate + ADP + H(+). It functions in the pathway isoprenoid biosynthesis; isopentenyl diphosphate biosynthesis via DXP pathway; isopentenyl diphosphate from 1-deoxy-D-xylulose 5-phosphate: step 3/6. In terms of biological role, catalyzes the phosphorylation of the position 2 hydroxy group of 4-diphosphocytidyl-2C-methyl-D-erythritol. This is 4-diphosphocytidyl-2-C-methyl-D-erythritol kinase from Rhodococcus jostii (strain RHA1).